The following is a 152-amino-acid chain: Deoxyuridine 5'-triphosphate nucleotidohydrolase (152 aa).

Residues 71 to 73 (RSG), N84, 88 to 90 (LID), and M98 contribute to the substrate site.

The protein belongs to the dUTPase family. Mg(2+) is required as a cofactor.

It catalyses the reaction dUTP + H2O = dUMP + diphosphate + H(+). The protein operates within pyrimidine metabolism; dUMP biosynthesis; dUMP from dCTP (dUTP route): step 2/2. In terms of biological role, this enzyme is involved in nucleotide metabolism: it produces dUMP, the immediate precursor of thymidine nucleotides and it decreases the intracellular concentration of dUTP so that uracil cannot be incorporated into DNA. The chain is Deoxyuridine 5'-triphosphate nucleotidohydrolase from Enterobacter sp. (strain 638).